Here is a 297-residue protein sequence, read N- to C-terminus: MADQLIRATAAGGGIRAVGVITTDLTAEAQRKHGLSFVATTALGRSMAAGLLLASSMKKEGSRVNLRIRSAGPLGGLMVDAGLDGTVRGYVEHPAIEIEPNTQGLPDVGRAIGPGYLHVMRDVGYGQPYTSTVELVNGEIGDDVAYYLASSEQTPSAILLGVYLDRQGVEAAGGLLIQVLPQAARDPELVSLLESRISHLKGFTQLLRSGKDLPEILEDLLGDLDLTILAEPRSLRFFCPCTHQRMLGALKIFGAPELRDMIAKDQGAEATCEFCSEVYQASIEELEELISDLETAA.

2 disulfides stabilise this stretch: Cys239–Cys241 and Cys272–Cys275.

It belongs to the HSP33 family. In terms of processing, under oxidizing conditions two disulfide bonds are formed involving the reactive cysteines. Under reducing conditions zinc is bound to the reactive cysteines and the protein is inactive.

The protein localises to the cytoplasm. Functionally, redox regulated molecular chaperone. Protects both thermally unfolding and oxidatively damaged proteins from irreversible aggregation. Plays an important role in the bacterial defense system toward oxidative stress. The polypeptide is 33 kDa chaperonin (Synechococcus elongatus (strain ATCC 33912 / PCC 7942 / FACHB-805) (Anacystis nidulans R2)).